Consider the following 320-residue polypeptide: 4-hydroxy-3-methylbut-2-enyl diphosphate reductase 2 (320 aa).

Cys-18 provides a ligand contact to [4Fe-4S] cluster. Residues His-47 and His-81 each coordinate (2E)-4-hydroxy-3-methylbut-2-enyl diphosphate. Dimethylallyl diphosphate is bound by residues His-47 and His-81. Positions 47 and 81 each coordinate isopentenyl diphosphate. Cys-103 is a [4Fe-4S] cluster binding site. His-131 provides a ligand contact to (2E)-4-hydroxy-3-methylbut-2-enyl diphosphate. Dimethylallyl diphosphate is bound at residue His-131. Residue His-131 participates in isopentenyl diphosphate binding. Glu-133 serves as the catalytic Proton donor. Thr-172 serves as a coordination point for (2E)-4-hydroxy-3-methylbut-2-enyl diphosphate. Cys-202 contacts [4Fe-4S] cluster. The (2E)-4-hydroxy-3-methylbut-2-enyl diphosphate site is built by Ser-230, Ser-231, Asn-232, and Ser-275. Dimethylallyl diphosphate contacts are provided by Ser-230, Ser-231, Asn-232, and Ser-275. Isopentenyl diphosphate contacts are provided by Ser-230, Ser-231, Asn-232, and Ser-275.

This sequence belongs to the IspH family. Requires [4Fe-4S] cluster as cofactor.

It carries out the reaction isopentenyl diphosphate + 2 oxidized [2Fe-2S]-[ferredoxin] + H2O = (2E)-4-hydroxy-3-methylbut-2-enyl diphosphate + 2 reduced [2Fe-2S]-[ferredoxin] + 2 H(+). The catalysed reaction is dimethylallyl diphosphate + 2 oxidized [2Fe-2S]-[ferredoxin] + H2O = (2E)-4-hydroxy-3-methylbut-2-enyl diphosphate + 2 reduced [2Fe-2S]-[ferredoxin] + 2 H(+). It participates in isoprenoid biosynthesis; dimethylallyl diphosphate biosynthesis; dimethylallyl diphosphate from (2E)-4-hydroxy-3-methylbutenyl diphosphate: step 1/1. It functions in the pathway isoprenoid biosynthesis; isopentenyl diphosphate biosynthesis via DXP pathway; isopentenyl diphosphate from 1-deoxy-D-xylulose 5-phosphate: step 6/6. Catalyzes the conversion of 1-hydroxy-2-methyl-2-(E)-butenyl 4-diphosphate (HMBPP) into a mixture of isopentenyl diphosphate (IPP) and dimethylallyl diphosphate (DMAPP). Acts in the terminal step of the DOXP/MEP pathway for isoprenoid precursor biosynthesis. In Rhodopseudomonas palustris (strain ATCC BAA-98 / CGA009), this protein is 4-hydroxy-3-methylbut-2-enyl diphosphate reductase 2.